Here is a 98-residue protein sequence, read N- to C-terminus: Co-chaperonin GroES 5 (98 aa).

The protein belongs to the GroES chaperonin family. In terms of assembly, heptamer of 7 subunits arranged in a ring. Interacts with the chaperonin GroEL.

It localises to the cytoplasm. Functionally, together with the chaperonin GroEL, plays an essential role in assisting protein folding. The GroEL-GroES system forms a nano-cage that allows encapsulation of the non-native substrate proteins and provides a physical environment optimized to promote and accelerate protein folding. GroES binds to the apical surface of the GroEL ring, thereby capping the opening of the GroEL channel. This Mesorhizobium japonicum (strain LMG 29417 / CECT 9101 / MAFF 303099) (Mesorhizobium loti (strain MAFF 303099)) protein is Co-chaperonin GroES 5.